The chain runs to 475 residues: Ribulose bisphosphate carboxylase large chain (475 aa).

Positions 1–2 (MS) are excised as a propeptide. At Pro-3 the chain carries N-acetylproline. Lys-14 is modified (N6,N6,N6-trimethyllysine). Substrate is bound by residues Asn-123 and Thr-173. Lys-175 serves as the catalytic Proton acceptor. Position 177 (Lys-177) interacts with substrate. Residues Lys-201, Asp-203, and Glu-204 each coordinate Mg(2+). N6-carboxylysine is present on Lys-201. Residue His-294 is the Proton acceptor of the active site. Substrate-binding residues include Arg-295, His-327, and Ser-379.

The protein belongs to the RuBisCO large chain family. Type I subfamily. Heterohexadecamer of 8 large chains and 8 small chains; disulfide-linked. The disulfide link is formed within the large subunit homodimers. It depends on Mg(2+) as a cofactor. In terms of processing, the disulfide bond which can form in the large chain dimeric partners within the hexadecamer appears to be associated with oxidative stress and protein turnover.

It is found in the plastid. It localises to the chloroplast. It carries out the reaction 2 (2R)-3-phosphoglycerate + 2 H(+) = D-ribulose 1,5-bisphosphate + CO2 + H2O. The catalysed reaction is D-ribulose 1,5-bisphosphate + O2 = 2-phosphoglycolate + (2R)-3-phosphoglycerate + 2 H(+). Its function is as follows. RuBisCO catalyzes two reactions: the carboxylation of D-ribulose 1,5-bisphosphate, the primary event in carbon dioxide fixation, as well as the oxidative fragmentation of the pentose substrate in the photorespiration process. Both reactions occur simultaneously and in competition at the same active site. This chain is Ribulose bisphosphate carboxylase large chain, found in Corylus cornuta (Beaked hazel).